We begin with the raw amino-acid sequence, 138 residues long: Acidic phospholipase A2 Tpu-E6a (138 aa).

Residues 1–16 form the signal peptide; sequence MRTLWIMAVLLLGVKG. 7 disulfide bridges follow: Cys42-Cys131, Cys44-Cys60, Cys59-Cys111, Cys65-Cys138, Cys66-Cys104, Cys73-Cys97, and Cys91-Cys102. Residues Tyr43, Gly45, and Gly47 each contribute to the Ca(2+) site. The active site involves His63. Asp64 is a Ca(2+) binding site. Asp105 is a catalytic residue.

Monomer. Ca(2+) is required as a cofactor. In terms of tissue distribution, expressed by the venom gland.

The protein resides in the secreted. It catalyses the reaction a 1,2-diacyl-sn-glycero-3-phosphocholine + H2O = a 1-acyl-sn-glycero-3-phosphocholine + a fatty acid + H(+). In terms of biological role, snake venom phospholipase A2 (PLA2) that impairs hemostasis. It weakly inhibits ADP-induced platelet aggregation when tested on platelet rich plasma from human and rabbit blood (15-25% of inhibition at 5-10 ug of enzyme), and dose-dependently inhibits blood coagulation, possibly by inhibiting thrombin activation. Exhibits high hydrolytic activities toward L-dipalmitoyl phosphatidylcholine. PLA2 catalyzes the calcium-dependent hydrolysis of the 2-acyl groups in 3-sn-phosphoglycerides. In Craspedocephalus puniceus (Flat-nosed pitviper), this protein is Acidic phospholipase A2 Tpu-E6a.